Reading from the N-terminus, the 287-residue chain is Mitochondrial glycine transporter B (287 aa).

3 Solcar repeats span residues 7-97 (HPAL…LKQH), 104-188 (PSAG…AKKA), and 198-282 (IAPL…LMAR). 6 helical membrane passes run 13–38 (FMCG…TRLQ), 72–98 (GVSP…KQHY), 110–135 (VLLG…TRFE), 163–186 (GLTA…SQAK), 202–228 (VNFG…KTHM), and 257–275 (GAVP…AWTV).

This sequence belongs to the mitochondrial carrier (TC 2.A.29) family. SLC25A38 subfamily. As to expression, at 24 hours post-fertilization, expressed predominantly in posterior blood island, posterior cardinal vein and circulating blood. At 34 hours post-fertilization, becomes restricted to posterior blood island and circulating blood.

It is found in the mitochondrion inner membrane. It catalyses the reaction glycine(in) = glycine(out). Mitochondrial glycine transporter that imports glycine into the mitochondrial matrix. Plays an important role in providing glycine for the first enzymatic step in heme biosynthesis, the condensation of glycine with succinyl-CoA to produce 5-aminolevulinate (ALA) in the mitochondrial matrix. Required during erythropoiesis. In terms of biological role, may play a role as pro-apoptotic protein that induces caspase-dependent apoptosis. The protein is Mitochondrial glycine transporter B (slc25a38b) of Danio rerio (Zebrafish).